Here is a 397-residue protein sequence, read N- to C-terminus: 2-oxoglutarate and iron-dependent oxygenase domain-containing protein ICU11 (397 aa).

A disordered region spans residues 1 to 56; that stretch reads MCNQTPLRSMALDSSGKQPEQQQQQQPRASSGNGEARLKLRRTPNEEHEPENYEDL. Low complexity predominate over residues 18 to 27; sequence QPEQQQQQQP. The Fe2OG dioxygenase domain maps to 238–339; the sequence is SLDSHHGYIV…RANLILWCRS (102 aa). Residues histidine 260, aspartate 262, and histidine 320 each coordinate Fe cation. Residue arginine 330 participates in 2-oxoglutarate binding.

It depends on Fe(2+) as a cofactor. L-ascorbate is required as a cofactor. Expressed in roots, cotyledons, rosette leaves, cauline leaves and inflorescences.

It is found in the nucleus. The protein localises to the nucleoplasm. Functionally, participates in the epigenetic repression of flowering genes in association with CP2. Functions in the repression of several members of the MADS-box transcription factors family, including SEP3, during vegetative development via histone modification. This Arabidopsis thaliana (Mouse-ear cress) protein is 2-oxoglutarate and iron-dependent oxygenase domain-containing protein ICU11.